We begin with the raw amino-acid sequence, 1002 residues long: Lon protease homolog, mitochondrial (1002 aa).

Residues 102–313 form the Lon N-terminal domain; sequence VIALPLPHRP…LTLELVKKEM (212 aa). 468–475 provides a ligand contact to ATP; that stretch reads GPPGVGKT. The region spanning 811 to 995 is the Lon proteolytic domain; that stretch reads QTPVGVVMGL…NEIFDIAFQS (185 aa). Residues Ser-901 and Lys-944 contribute to the active site.

Belongs to the peptidase S16 family. As to quaternary structure, homohexamer or homoheptamer. Organized in a ring with a central cavity.

It localises to the mitochondrion matrix. The catalysed reaction is Hydrolysis of proteins in presence of ATP.. Its function is as follows. ATP-dependent serine protease that mediates the selective degradation of misfolded, unassembled or oxidatively damaged polypeptides as well as certain short-lived regulatory proteins in the mitochondrial matrix. May also have a chaperone function in the assembly of inner membrane protein complexes. Participates in the regulation of mitochondrial gene expression and in the maintenance of the integrity of the mitochondrial genome. Binds to mitochondrial DNA in a site-specific manner. The sequence is that of Lon protease homolog, mitochondrial from Oryza sativa subsp. indica (Rice).